The sequence spans 97 residues: EVASDDVAAEEAAAAPKIGRRVRVTAPLRVYHVLKAPDLDIQGMEGVVKQYVCVWKGKRVTANFPFKVEFELAVEGQPKPVRFFAHLREDEFEFVDG.

It belongs to the ferredoxin thioredoxin reductase alpha subunit family. In terms of assembly, heterodimer of subunit A (variable subunit) and subunit B (catalytic subunit). Heterodimeric FTR forms a complex with ferredoxin and thioredoxin.

It localises to the plastid. It is found in the chloroplast. Its function is as follows. Variable subunit of the ferredoxin-thioredoxin reductase (FTR), which catalyzes the two-electron reduction of thioredoxins by the electrons provided by reduced ferredoxin. This chain is Ferredoxin-thioredoxin reductase, variable chain, found in Zea mays (Maize).